The primary structure comprises 200 residues: dITP/XTP pyrophosphatase (200 aa).

8-13 (THNPNK) contributes to the substrate binding site. Residues glutamate 41 and aspartate 71 each coordinate Mg(2+). Aspartate 71 acts as the Proton acceptor in catalysis. Substrate is bound by residues threonine 72, 153–156 (FGYD), lysine 176, and 181–182 (HR).

Belongs to the HAM1 NTPase family. As to quaternary structure, homodimer. Mg(2+) is required as a cofactor.

It catalyses the reaction XTP + H2O = XMP + diphosphate + H(+). It carries out the reaction dITP + H2O = dIMP + diphosphate + H(+). The catalysed reaction is ITP + H2O = IMP + diphosphate + H(+). Its function is as follows. Pyrophosphatase that catalyzes the hydrolysis of nucleoside triphosphates to their monophosphate derivatives, with a high preference for the non-canonical purine nucleotides XTP (xanthosine triphosphate), dITP (deoxyinosine triphosphate) and ITP. Seems to function as a house-cleaning enzyme that removes non-canonical purine nucleotides from the nucleotide pool, thus preventing their incorporation into DNA/RNA and avoiding chromosomal lesions. This is dITP/XTP pyrophosphatase from Caldanaerobacter subterraneus subsp. tengcongensis (strain DSM 15242 / JCM 11007 / NBRC 100824 / MB4) (Thermoanaerobacter tengcongensis).